The chain runs to 404 residues: Dual-specificity RNA methyltransferase RlmN (404 aa).

Residue E118 is the Proton acceptor of the active site. Residues 125–357 (VGRAGALCVS…NKAGYSSPIR (233 aa)) form the Radical SAM core domain. An intrachain disulfide couples C132 to C368. C139, C143, and C146 together coordinate [4Fe-4S] cluster. S-adenosyl-L-methionine-binding positions include 194–195 (GE), S226, 248–250 (SLH), and N325. C368 functions as the S-methylcysteine intermediate in the catalytic mechanism.

This sequence belongs to the radical SAM superfamily. RlmN family. The cofactor is [4Fe-4S] cluster.

Its subcellular location is the cytoplasm. It carries out the reaction adenosine(2503) in 23S rRNA + 2 reduced [2Fe-2S]-[ferredoxin] + 2 S-adenosyl-L-methionine = 2-methyladenosine(2503) in 23S rRNA + 5'-deoxyadenosine + L-methionine + 2 oxidized [2Fe-2S]-[ferredoxin] + S-adenosyl-L-homocysteine. It catalyses the reaction adenosine(37) in tRNA + 2 reduced [2Fe-2S]-[ferredoxin] + 2 S-adenosyl-L-methionine = 2-methyladenosine(37) in tRNA + 5'-deoxyadenosine + L-methionine + 2 oxidized [2Fe-2S]-[ferredoxin] + S-adenosyl-L-homocysteine. In terms of biological role, specifically methylates position 2 of adenine 2503 in 23S rRNA and position 2 of adenine 37 in tRNAs. m2A2503 modification seems to play a crucial role in the proofreading step occurring at the peptidyl transferase center and thus would serve to optimize ribosomal fidelity. This Caulobacter vibrioides (strain ATCC 19089 / CIP 103742 / CB 15) (Caulobacter crescentus) protein is Dual-specificity RNA methyltransferase RlmN.